Here is a 450-residue protein sequence, read N- to C-terminus: MAPALSPTRSHHVAVIGAGPAGLVAARELRREGHSVVVFEKQKQVGGTWIYTDEVESDPLSVDPTRSVVHSSVYRSLRINGTRECTGYRDFPFVVRSGVSRDPRRFPSHGEVLAYLKDFAKEFGIEEMVRFETEVVKVSPAAEEGIGKWRIESTEKEKKVRRDEIYDAVVVCNGHYVEPRLAQIPGISSWPGKEMHSHNYRIPEPFRDKVVVLIGNSSSAEDISRDIARVAKEVHVACRSNPADTFIKQTGYNNLWTHSMIESVHEDGSVVYQNGKTISVDIIMHCTGYKYHFPFLDTNGIVTVDDNRVGPLYKDVFPPAFAPWLSFIGIPWQVLPFPMFELQSKWIAGVLSGRIPLPSKEDMMIEIKTFYSTLEVQGIPKRYTHRMGNTQFEYYNWLASQCGCSETEEWRKEMCLANGVRKEAHPETYRDEWDDHHLVSEAYQDFSLYS.

An FAD-binding site is contributed by 17 to 22 (GAGPAG). Residue 215 to 220 (GNSSSA) coordinates NADP(+).

Belongs to the FMO family. Requires FAD as cofactor.

Functionally, catalyzes the conversion of methylthioalkyl glucosinolates of any chain length into methylsulfinylalkyl glucosinolates. This chain is Flavin-containing monooxygenase FMO GS-OX-like 3, found in Arabidopsis thaliana (Mouse-ear cress).